We begin with the raw amino-acid sequence, 492 residues long: Glycerol kinase (492 aa).

Residue T11 coordinates ADP. The ATP site is built by T11 and T12. A sn-glycerol 3-phosphate-binding site is contributed by T11. K15 serves as a coordination point for ADP. Sn-glycerol 3-phosphate-binding residues include R79, E80, Y129, and D238. 5 residues coordinate glycerol: R79, E80, Y129, D238, and Q239. ADP contacts are provided by T260, G302, G403, and N407. Residues T260, G302, and G403 each contribute to the ATP site.

It belongs to the FGGY kinase family.

The catalysed reaction is glycerol + ATP = sn-glycerol 3-phosphate + ADP + H(+). Its pathway is polyol metabolism; glycerol degradation via glycerol kinase pathway; sn-glycerol 3-phosphate from glycerol: step 1/1. With respect to regulation, inhibited by fructose 1,6-bisphosphate (FBP). Functionally, key enzyme in the regulation of glycerol uptake and metabolism. Catalyzes the phosphorylation of glycerol to yield sn-glycerol 3-phosphate. The polypeptide is Glycerol kinase (Aquifex aeolicus (strain VF5)).